Here is a 215-residue protein sequence, read N- to C-terminus: 3-demethoxyubiquinol 3-hydroxylase (215 aa).

The Fe cation site is built by glutamate 64, glutamate 94, histidine 97, glutamate 146, glutamate 178, and histidine 181.

Belongs to the COQ7 family. Fe cation is required as a cofactor.

It is found in the cell membrane. It carries out the reaction a 5-methoxy-2-methyl-3-(all-trans-polyprenyl)benzene-1,4-diol + AH2 + O2 = a 3-demethylubiquinol + A + H2O. Its pathway is cofactor biosynthesis; ubiquinone biosynthesis. Its function is as follows. Catalyzes the hydroxylation of 2-nonaprenyl-3-methyl-6-methoxy-1,4-benzoquinol during ubiquinone biosynthesis. In Pseudomonas paraeruginosa (strain DSM 24068 / PA7) (Pseudomonas aeruginosa (strain PA7)), this protein is 3-demethoxyubiquinol 3-hydroxylase.